The following is a 309-amino-acid chain: Tagatose-6-phosphate kinase (309 aa).

Belongs to the carbohydrate kinase PfkB family. LacC subfamily.

The enzyme catalyses D-tagatofuranose 6-phosphate + ATP = D-tagatofuranose 1,6-bisphosphate + ADP + H(+). Its pathway is carbohydrate metabolism; D-tagatose 6-phosphate degradation; D-glyceraldehyde 3-phosphate and glycerone phosphate from D-tagatose 6-phosphate: step 1/2. The sequence is that of Tagatose-6-phosphate kinase from Streptococcus pyogenes serotype M4 (strain MGAS10750).